The primary structure comprises 255 residues: Ribonuclease HII (255 aa).

In terms of domain architecture, RNase H type-2 spans 72-255 (AIICGIDEVG…KSFEPIKSLL (184 aa)). Residues D78, E79, and D170 each contribute to the a divalent metal cation site.

The protein belongs to the RNase HII family. The cofactor is Mn(2+). Requires Mg(2+) as cofactor.

It localises to the cytoplasm. It catalyses the reaction Endonucleolytic cleavage to 5'-phosphomonoester.. Functionally, endonuclease that specifically degrades the RNA of RNA-DNA hybrids. This chain is Ribonuclease HII, found in Staphylococcus aureus (strain bovine RF122 / ET3-1).